Here is a 547-residue protein sequence, read N- to C-terminus: Signal recognition particle receptor subunit alpha homolog (547 aa).

The interval 124–174 (LENETDTKSLPVEANNDNSARKKNEYEMKKKGAQSKQTNAPKKGKKQLRKW) is disordered. Basic and acidic residues predominate over residues 142–153 (SARKKNEYEMKK). The segment at 343 to 546 (YTISLIGVNG…SVDWVVDQLM (204 aa)) is NG domain. Residues 349 to 356 (GVNGVGKS), 437 to 441 (DTAGR), and 498 to 501 (SKVD) contribute to the GTP site.

The protein belongs to the GTP-binding SRP family. As to quaternary structure, heterodimer of an alpha and a beta chain.

The protein localises to the endoplasmic reticulum membrane. Component of the SRP (signal recognition particle) receptor (SR). Ensures, in conjunction with the signal recognition particle, the correct targeting of the nascent secretory proteins to the endoplasmic reticulum membrane system. GTP hydrolysis may enhance the fidelity of and provide unidirectionality to the targeting reaction. The chain is Signal recognition particle receptor subunit alpha homolog (srp101) from Schizosaccharomyces pombe (strain 972 / ATCC 24843) (Fission yeast).